The primary structure comprises 158 residues: Small ribosomal subunit protein uS9 (158 aa).

It belongs to the universal ribosomal protein uS9 family.

This Nitrobacter winogradskyi (strain ATCC 25391 / DSM 10237 / CIP 104748 / NCIMB 11846 / Nb-255) protein is Small ribosomal subunit protein uS9.